A 448-amino-acid chain; its full sequence is MVFSPHTADDRARMLQEIGVERLEELFAAIPASYRFPQLDLPPAISEAEIYRELLEWSMQNFSTATTASFLGAGSYNHYVPAVVQQILWRGEFYTAYTPYQPEVSQGTLQAIYEFQSLICLLTGMEVSNASMYDGATALAEGALLCVSPPRGRNKIVVAGTVHPHYRSVLRTYTRGLPVSIVEVPIPETLRLQPNDVAQYLDDATACLVVQYPNFYGRIEDLAGFAERAHAVGARLVVSVYPIALGLLRPPGELGADVVTGEGQCLGIPQSFGGPALGILATRMELVRHLPGRLIGATVDREGKRGFVMVLQTREQHIRREKATSNICTNQGLMALAATVYLSTLGKQGLRKVAELCYHKAHYLAERIADLPAWNVIGDGPFFNEFAVRCPRDPREINAFLLERGIIGGLALGDLVPGQQDLMLLCATELTTREQIDRLVEALREATA.

Belongs to the GcvP family. N-terminal subunit subfamily. In terms of assembly, the glycine cleavage system is composed of four proteins: P, T, L and H. In this organism, the P 'protein' is a heterodimer of two subunits.

The enzyme catalyses N(6)-[(R)-lipoyl]-L-lysyl-[glycine-cleavage complex H protein] + glycine + H(+) = N(6)-[(R)-S(8)-aminomethyldihydrolipoyl]-L-lysyl-[glycine-cleavage complex H protein] + CO2. Functionally, the glycine cleavage system catalyzes the degradation of glycine. The P protein binds the alpha-amino group of glycine through its pyridoxal phosphate cofactor; CO(2) is released and the remaining methylamine moiety is then transferred to the lipoamide cofactor of the H protein. The protein is Probable glycine dehydrogenase (decarboxylating) subunit 1 of Thermomicrobium roseum (strain ATCC 27502 / DSM 5159 / P-2).